Consider the following 418-residue polypeptide: Serine hydroxymethyltransferase (418 aa).

(6S)-5,6,7,8-tetrahydrofolate is bound by residues leucine 121 and 125 to 127 (GHL). The residue at position 230 (lysine 230) is an N6-(pyridoxal phosphate)lysine. Residue 356–358 (SPF) coordinates (6S)-5,6,7,8-tetrahydrofolate.

It belongs to the SHMT family. In terms of assembly, homodimer. The cofactor is pyridoxal 5'-phosphate.

The protein resides in the cytoplasm. The enzyme catalyses (6R)-5,10-methylene-5,6,7,8-tetrahydrofolate + glycine + H2O = (6S)-5,6,7,8-tetrahydrofolate + L-serine. Its pathway is one-carbon metabolism; tetrahydrofolate interconversion. The protein operates within amino-acid biosynthesis; glycine biosynthesis; glycine from L-serine: step 1/1. Its function is as follows. Catalyzes the reversible interconversion of serine and glycine with tetrahydrofolate (THF) serving as the one-carbon carrier. This reaction serves as the major source of one-carbon groups required for the biosynthesis of purines, thymidylate, methionine, and other important biomolecules. Also exhibits THF-independent aldolase activity toward beta-hydroxyamino acids, producing glycine and aldehydes, via a retro-aldol mechanism. This chain is Serine hydroxymethyltransferase, found in Shewanella halifaxensis (strain HAW-EB4).